A 124-amino-acid chain; its full sequence is MNHPSELKYATTHEWVRIEGDLIVTGISDHAQDALGDLVYVEVPEVGSHMTAGTQAGVVESVKTASDIHAPVSGTVVEVNTALEDDPDFINDEPYGKGWIYKMKPDNIADVDQLLSNTDYEAGL.

Residues 22–104 (LIVTGISDHA…YGKGWIYKMK (83 aa)) enclose the Lipoyl-binding domain. Lys-63 carries the post-translational modification N6-lipoyllysine.

Belongs to the GcvH family. In terms of assembly, the glycine cleavage system is composed of four proteins: P, T, L and H. The cofactor is (R)-lipoate.

Functionally, the glycine cleavage system catalyzes the degradation of glycine. The H protein shuttles the methylamine group of glycine from the P protein to the T protein. The chain is Glycine cleavage system H protein from Acinetobacter baylyi (strain ATCC 33305 / BD413 / ADP1).